The primary structure comprises 282 residues: Deoxyribonuclease-1 (282 aa).

An N-terminal signal peptide occupies residues methionine 1–threonine 20. Asparagine 38 carries N-linked (GlcNAc...) asparagine glycosylation. Glutamate 98 is an active-site residue. A disulfide bridge connects residues cysteine 121 and cysteine 124. The active site involves histidine 154. An intrachain disulfide couples cysteine 193 to cysteine 229.

It belongs to the DNase I family. The cofactor is Ca(2+). Requires Mg(2+) as cofactor. In terms of processing, N-glycosylated.

The protein resides in the secreted. Its subcellular location is the zymogen granule. The protein localises to the nucleus envelope. It carries out the reaction Endonucleolytic cleavage to 5'-phosphodinucleotide and 5'-phosphooligonucleotide end-products.. In terms of biological role, serum endocuclease secreted into body fluids by a wide variety of exocrine and endocrine organs. Expressed by non-hematopoietic tissues and preferentially cleaves protein-free DNA. Among other functions, seems to be involved in cell death by apoptosis. Binds specifically to G-actin and blocks actin polymerization. In Gallus gallus (Chicken), this protein is Deoxyribonuclease-1 (DNASE1).